The chain runs to 337 residues: G-protein coupled receptor 26 (337 aa).

Residues 1 to 10 (MNSWDAGLAG) are Extracellular-facing. A helical transmembrane segment spans residues 11-31 (LLVGTIGVSLLSNGLVLLCLL). Topologically, residues 32–47 (HSADIRRQAPALFTLN) are cytoplasmic. Residues 48-68 (LTCGNLLCTVVNMPLTLAGVV) traverse the membrane as a helical segment. Residues 69–81 (AQRQPAGDRLCRL) lie on the Extracellular side of the membrane. Cys-79 and Cys-156 are disulfide-bonded. A helical membrane pass occupies residues 82 to 102 (AAFLDTFLAANSMLSMAALSI). Residues 103-123 (DRWVAVVFPLSYRAKMRLRDA) lie on the Cytoplasmic side of the membrane. Residues 124–144 (AFMVAYTWLHALTFPATALAL) form a helical membrane-spanning segment. Over 145–168 (SWLGFHQLYASCTLCSRRPDERLR) the chain is Extracellular. The chain crosses the membrane as a helical span at residues 169–189 (FAVFTSAFHALSFLLSFIVLC). At 190-245 (FTYLKVLKVARFHCKRIDVITMQTLVLLVDIHPSVRERCLEEQKRRRQRATKKIST) the chain is on the cytoplasmic side. Residues 246 to 266 (FIGTFLVCFAPYVITRLVELF) traverse the membrane as a helical segment. Topologically, residues 267–276 (STAPIGSHWG) are extracellular. Residues 277–297 (VLSKCLAYSKAASDPFVYSLL) form a helical membrane-spanning segment. Over 298–337 (RHQYRRSCKELLNRIFNRRSLHSVGLTGDSHSQNILPVSE) the chain is Cytoplasmic.

The protein belongs to the G-protein coupled receptor 1 family. In terms of tissue distribution, exclusively expressed in the brain. Prominent expression is detected throughout the entire neocortex at all rostrocaudal and dorsoventral levels. Strong expression is detected in olfactory and auditory sensory areas.

It localises to the cell membrane. Its function is as follows. Orphan receptor. Displays a significant level of constitutive activity. Its effect is mediated by G(s)-alpha protein that stimulate adenylate cyclase, resulting in an elevation of intracellular cAMP. The protein is G-protein coupled receptor 26 (Gpr26) of Mus musculus (Mouse).